The sequence spans 395 residues: S-adenosylmethionine synthase (395 aa).

H14 contributes to the ATP binding site. D16 is a binding site for Mg(2+). E42 contributes to the K(+) binding site. Residues E55 and Q98 each contribute to the L-methionine site. The tract at residues 98–108 is flexible loop; that stretch reads QSPDIALGVDK. ATP is bound by residues 174–176, 240–241, D249, 255–256, A272, and K276; these read DGK, RF, and RK. L-methionine is bound at residue D249. An L-methionine-binding site is contributed by K280.

It belongs to the AdoMet synthase family. As to quaternary structure, homotetramer; dimer of dimers. The cofactor is Mg(2+). Requires K(+) as cofactor.

Its subcellular location is the cytoplasm. The catalysed reaction is L-methionine + ATP + H2O = S-adenosyl-L-methionine + phosphate + diphosphate. The protein operates within amino-acid biosynthesis; S-adenosyl-L-methionine biosynthesis; S-adenosyl-L-methionine from L-methionine: step 1/1. Its function is as follows. Catalyzes the formation of S-adenosylmethionine (AdoMet) from methionine and ATP. The overall synthetic reaction is composed of two sequential steps, AdoMet formation and the subsequent tripolyphosphate hydrolysis which occurs prior to release of AdoMet from the enzyme. This chain is S-adenosylmethionine synthase, found in Thermotoga neapolitana (strain ATCC 49049 / DSM 4359 / NBRC 107923 / NS-E).